An 874-amino-acid chain; its full sequence is Tyrosine-protein kinase receptor TYRO3 (874 aa).

Residues 1-20 (MEVSLCILLFLLHFNEGIHG) form the signal peptide. Ig-like C2-type domains lie at 21–106 (VRFT…IISS) and 117–198 (PHFG…GTVH). Topologically, residues 21 to 411 (VRFTQKPFHQ…QAQTQRGHMW (391 aa)) are extracellular. Cysteine 42 and cysteine 95 form a disulfide bridge. Asparagine 135, asparagine 174, asparagine 217, asparagine 270, asparagine 305, and asparagine 373 each carry an N-linked (GlcNAc...) asparagine glycan. The cysteines at positions 138 and 181 are disulfide-linked. Fibronectin type-III domains are found at residues 202–297 (RPDS…TPQA) and 299–403 (PSAA…AMQA). The chain crosses the membrane as a helical span at residues 412–432 (VGLLFGLLVATMVGLLLIVLI). Over 433–874 (RNRGKETQFG…EEEEDVIINV (442 aa)) the chain is Cytoplasmic. The region spanning 497–768 (LTLGRMLGKG…QHLIDQLELL (272 aa)) is the Protein kinase domain. ATP contacts are provided by residues 503 to 511 (LGKGEFGSV) and lysine 529. The active-site Proton acceptor is the aspartate 634. Tyrosine 665 is modified (phosphotyrosine; by autocatalysis).

The protein belongs to the protein kinase superfamily. Tyr protein kinase family. AXL/UFO subfamily.

It localises to the cell membrane. It catalyses the reaction L-tyrosyl-[protein] + ATP = O-phospho-L-tyrosyl-[protein] + ADP + H(+). In terms of biological role, may be involved in cell adhesion processes, particularly in the central nervous system. In Danio rerio (Zebrafish), this protein is Tyrosine-protein kinase receptor TYRO3 (tyro3).